The primary structure comprises 314 residues: Ribosomal RNA small subunit methyltransferase A (314 aa).

The S-adenosyl-L-methionine site is built by Asn29, Val31, Gly56, Glu77, Asp107, and Asn126. Residues 291 to 314 (PKADDAGDDADAQAKADGAQVSTL) are disordered. The segment covering 303 to 314 (QAKADGAQVSTL) has biased composition (low complexity).

Belongs to the class I-like SAM-binding methyltransferase superfamily. rRNA adenine N(6)-methyltransferase family. RsmA subfamily.

Its subcellular location is the cytoplasm. It catalyses the reaction adenosine(1518)/adenosine(1519) in 16S rRNA + 4 S-adenosyl-L-methionine = N(6)-dimethyladenosine(1518)/N(6)-dimethyladenosine(1519) in 16S rRNA + 4 S-adenosyl-L-homocysteine + 4 H(+). Its function is as follows. Specifically dimethylates two adjacent adenosines (A1518 and A1519) in the loop of a conserved hairpin near the 3'-end of 16S rRNA in the 30S particle. May play a critical role in biogenesis of 30S subunits. The chain is Ribosomal RNA small subunit methyltransferase A from Mycolicibacterium gilvum (strain PYR-GCK) (Mycobacterium gilvum (strain PYR-GCK)).